The chain runs to 355 residues: tRNA-specific 2-thiouridylase MnmA (355 aa).

ATP is bound by residues 8–15 (GMSGGVDS) and Met-34. Catalysis depends on Cys-103, which acts as the Nucleophile. Cys-103 and Cys-199 are joined by a disulfide. Gly-127 provides a ligand contact to ATP. An interaction with tRNA region spans residues 149–151 (KDQ). Residue Cys-199 is the Cysteine persulfide intermediate of the active site. The interaction with tRNA stretch occupies residues 305-306 (RY).

Belongs to the MnmA/TRMU family.

It is found in the cytoplasm. The catalysed reaction is S-sulfanyl-L-cysteinyl-[protein] + uridine(34) in tRNA + AH2 + ATP = 2-thiouridine(34) in tRNA + L-cysteinyl-[protein] + A + AMP + diphosphate + H(+). Functionally, catalyzes the 2-thiolation of uridine at the wobble position (U34) of tRNA, leading to the formation of s(2)U34. This chain is tRNA-specific 2-thiouridylase MnmA, found in Clostridium acetobutylicum (strain ATCC 824 / DSM 792 / JCM 1419 / IAM 19013 / LMG 5710 / NBRC 13948 / NRRL B-527 / VKM B-1787 / 2291 / W).